A 215-amino-acid polypeptide reads, in one-letter code: ATP-dependent Clp protease proteolytic subunit (215 aa).

Catalysis depends on Ser-116, which acts as the Nucleophile. The active site involves His-141.

The protein belongs to the peptidase S14 family. Fourteen ClpP subunits assemble into 2 heptameric rings which stack back to back to give a disk-like structure with a central cavity, resembling the structure of eukaryotic proteasomes.

It is found in the cytoplasm. The enzyme catalyses Hydrolysis of proteins to small peptides in the presence of ATP and magnesium. alpha-casein is the usual test substrate. In the absence of ATP, only oligopeptides shorter than five residues are hydrolyzed (such as succinyl-Leu-Tyr-|-NHMec, and Leu-Tyr-Leu-|-Tyr-Trp, in which cleavage of the -Tyr-|-Leu- and -Tyr-|-Trp bonds also occurs).. Functionally, cleaves peptides in various proteins in a process that requires ATP hydrolysis. Has a chymotrypsin-like activity. Plays a major role in the degradation of misfolded proteins. The chain is ATP-dependent Clp protease proteolytic subunit from Psychrobacter cryohalolentis (strain ATCC BAA-1226 / DSM 17306 / VKM B-2378 / K5).